We begin with the raw amino-acid sequence, 303 residues long: T-box protein 38 (303 aa).

Positions 14–195 (LSTPEIWEEF…HNKFASGFRS (182 aa)) form a DNA-binding region, T-box. A disordered region spans residues 193 to 225 (FRSNGKRRLSSDSENSENSPPKRSKLVTPPTIS). A compositionally biased stretch (low complexity) spans 204 to 213 (DSENSENSPP).

The protein resides in the nucleus. Functionally, transcription factor. Required for mesodermal induction, acting redundantly with transcription factor tbx-37. Together with tbx-37, acts by inducing cell fates in the AB lineage, thereby playing a role in development of the anterior pharynx. The protein is T-box protein 38 (tbx-38) of Caenorhabditis elegans.